The chain runs to 190 residues: Peptide methionine sulfoxide reductase A2-2 (190 aa).

The disordered stretch occupies residues 1–20 (MSNDTGADGGAANPDLGPDA). Over residues 10 to 20 (GAANPDLGPDA) the composition is skewed to low complexity.

The protein belongs to the MsrA Met sulfoxide reductase family.

The protein localises to the cytoplasm. The protein resides in the cytosol. It catalyses the reaction L-methionyl-[protein] + [thioredoxin]-disulfide + H2O = L-methionyl-(S)-S-oxide-[protein] + [thioredoxin]-dithiol. It carries out the reaction [thioredoxin]-disulfide + L-methionine + H2O = L-methionine (S)-S-oxide + [thioredoxin]-dithiol. Its function is as follows. Catalyzes the reduction of methionine sulfoxide (MetSO) to methionine in proteins. Plays a protective role against oxidative stress by restoring activity to proteins that have been inactivated by methionine oxidation. MSRA family specifically reduces the MetSO S-enantiomer. The protein is Peptide methionine sulfoxide reductase A2-2 (MSRA2-2) of Oryza sativa subsp. japonica (Rice).